Here is a 483-residue protein sequence, read N- to C-terminus: ATP-dependent RNA helicase DDX25 (483 aa).

Residues 61 to 74 carry the Nuclear export signal motif; the sequence is LAANSLLNKLIHQS. Residues 97 to 125 carry the Q motif motif; that stretch reads KTFEELRLKEELLKGIYAMGFNRPSKIQE. The Nuclear localization signal motif lies at 100-114; it reads EELRLKEELLKGIYA. The Helicase ATP-binding domain maps to 130–300; the sequence is MMLAHPPQNL…ERIIPDPNVI (171 aa). 143 to 150 contacts ATP; sequence SQSGTGKT. The short motif at 247 to 250 is the DEAD box element; it reads DEAD. In terms of domain architecture, Helicase C-terminal spans 311-478; that stretch reads NIRQYYVLCE…QLNAEDMDEI (168 aa).

It belongs to the DEAD box helicase family. In terms of processing, phosphorylated on threonine residues. The phosphorylated form is found in the cytoplasm but not in the nucleus. In terms of tissue distribution, highly expressed in the Leydig and germ cells of the testis and weakly expressed in the pituitary and hypothalamus.

The protein localises to the cytoplasm. It is found in the nucleus. It carries out the reaction ATP + H2O = ADP + phosphate + H(+). In terms of biological role, ATP-dependent RNA helicase. Required for mRNA export and translation regulation during spermatid development. The polypeptide is ATP-dependent RNA helicase DDX25 (DDX25) (Homo sapiens (Human)).